We begin with the raw amino-acid sequence, 155 residues long: RNA pyrophosphohydrolase (155 aa).

The region spanning Lys5–Ala147 is the Nudix hydrolase domain. The short motif at Gly42–Gly63 is the Nudix box element.

Belongs to the Nudix hydrolase family. RppH subfamily. A divalent metal cation is required as a cofactor.

In terms of biological role, accelerates the degradation of transcripts by removing pyrophosphate from the 5'-end of triphosphorylated RNA, leading to a more labile monophosphorylated state that can stimulate subsequent ribonuclease cleavage. This is RNA pyrophosphohydrolase from Helicobacter pylori (strain ATCC 700392 / 26695) (Campylobacter pylori).